The following is a 129-amino-acid chain: Large ribosomal subunit protein uL22 (129 aa).

This sequence belongs to the universal ribosomal protein uL22 family. Part of the 50S ribosomal subunit.

Functionally, this protein binds specifically to 23S rRNA; its binding is stimulated by other ribosomal proteins, e.g. L4, L17, and L20. It is important during the early stages of 50S assembly. It makes multiple contacts with different domains of the 23S rRNA in the assembled 50S subunit and ribosome. The globular domain of the protein is located near the polypeptide exit tunnel on the outside of the subunit, while an extended beta-hairpin is found that lines the wall of the exit tunnel in the center of the 70S ribosome. This Brucella abortus (strain 2308) protein is Large ribosomal subunit protein uL22.